Here is a 520-residue protein sequence, read N- to C-terminus: Sensory neuron membrane protein 1 (520 aa).

Topologically, residues 1–5 (MKPKK) are cytoplasmic. A helical membrane pass occupies residues 6–26 (LGIIGGSLLAFGILICAIAFP). Residues 27–451 (PFLRSQVKKQ…KLKTVFKTIS (425 aa)) are Extracellular-facing. N-linked (GlcNAc...) asparagine glycosylation is found at N64, N224, and N268. 3 cysteine pairs are disulfide-bonded: C264-C329, C293-C348, and C331-C337. Residues 452-472 (IVGFMKWFTIVSGTCVSGAAA) traverse the membrane as a helical segment. Topologically, residues 473 to 520 (ALFFKNKDKNKLDITKVTPQKGEEKKWPNQMTISTIQSAAVPPNLDAD) are cytoplasmic.

This sequence belongs to the CD36 family.

Its subcellular location is the cell membrane. In terms of biological role, plays an olfactory role that is not restricted to pheromone sensitivity. The protein is Sensory neuron membrane protein 1 of Apis mellifera (Honeybee).